Here is a 591-residue protein sequence, read N- to C-terminus: Polyphenol oxidase D, chloroplastic (591 aa).

The transit peptide at 1–83 directs the protein to the chloroplast; it reads MASLCSNSST…ANAIPLAASA (83 aa). Intrachain disulfides connect Cys-94/Cys-110 and Cys-109/Cys-177. Cu cation-binding residues include His-176, His-194, His-203, His-324, His-328, and His-366. A cross-link (2'-(S-cysteinyl)-histidine (Cys-His)) is located at residues 180-194; that stretch reads CNGAYRIGGKELQVH.

The protein belongs to the tyrosinase family. The cofactor is Cu(2+).

The protein resides in the plastid. Its subcellular location is the chloroplast thylakoid lumen. It catalyses the reaction 2 catechol + O2 = 2 1,2-benzoquinone + 2 H2O. In terms of biological role, catalyzes the oxidation of mono- and o-diphenols to o-diquinones. The sequence is that of Polyphenol oxidase D, chloroplastic from Solanum lycopersicum (Tomato).